We begin with the raw amino-acid sequence, 102 residues long: Small ribosomal subunit protein uS10 (102 aa).

The protein belongs to the universal ribosomal protein uS10 family. Part of the 30S ribosomal subunit.

Involved in the binding of tRNA to the ribosomes. This chain is Small ribosomal subunit protein uS10, found in Akkermansia muciniphila (strain ATCC BAA-835 / DSM 22959 / JCM 33894 / BCRC 81048 / CCUG 64013 / CIP 107961 / Muc).